Consider the following 91-residue polypeptide: Small ribosomal subunit protein bS18 (91 aa).

The disordered stretch occupies residues 1 to 21 (MSDERAPQRSTGPRKKRPFQR). The segment covering 12 to 21 (GPRKKRPFQR) has biased composition (basic residues).

Belongs to the bacterial ribosomal protein bS18 family. In terms of assembly, part of the 30S ribosomal subunit. Forms a tight heterodimer with protein bS6.

Functionally, binds as a heterodimer with protein bS6 to the central domain of the 16S rRNA, where it helps stabilize the platform of the 30S subunit. The chain is Small ribosomal subunit protein bS18 from Geotalea daltonii (strain DSM 22248 / JCM 15807 / FRC-32) (Geobacter daltonii).